The sequence spans 62 residues: High-potential iron-sulfur protein (62 aa).

The [4Fe-4S] cluster site is built by C22, C25, C40, and C55.

Belongs to the high-potential iron-sulfur protein (HiPIP) family. Homodimer.

In terms of biological role, specific class of high-redox-potential 4Fe-4S ferredoxins. Functions in anaerobic electron transport in most purple and in some other photosynthetic bacteria and in at least one genus (Paracoccus) of halophilic, denitrifying bacteria. This is High-potential iron-sulfur protein (hip) from Rhodocyclus tenuis (Rhodospirillum tenue).